A 451-amino-acid chain; its full sequence is Cobalamin reductase PduS (451 aa).

4Fe-4S ferredoxin-type domains lie at 255 to 284 (TVLS…HELS) and 300 to 330 (PQLL…MRIN). Cys-264, Cys-267, Cys-270, Cys-274, Cys-309, Cys-312, Cys-315, and Cys-320 together coordinate [4Fe-4S] cluster.

The protein belongs to the PduS cobalamin reductase family. In terms of assembly, monomer, forms a complex with PduO. Interacts with PduT, probably via the N-terminus of PduS. [4Fe-4S] cluster serves as cofactor. FMN is required as a cofactor.

The protein localises to the bacterial microcompartment. The protein operates within polyol metabolism; 1,2-propanediol degradation. A bifunctional cobalamin reductase that converts cob(III)alamin to cob(II)alamin and then to cob(I)alamin in the bacterial microcompartment (BMC) dedicated to 1,2-propanediol (1,2-PD) degradation. PduS and PduO allow regeneration of the adenosylcobalamin cofactor within the BMC. Cobalamin reduction probably occurs spontaneously in the presence of free reduced flavin nucleotides, this protein may be involved in electron transfer for this reduction. Functionally, expression of a cosmid containing the full 21-gene pdu operon in E.coli allows E.coli to grow on 1,2-propanediol (1,2-PD) with the appearance of BMCs in its cytoplasm. Its function is as follows. The 1,2-PD-specific bacterial microcompartment (BMC) concentrates low levels of 1,2-PD catabolic enzymes, concentrates volatile reaction intermediates thus enhancing pathway flux and keeps the level of toxic, mutagenic propionaldehyde low. The sequence is that of Cobalamin reductase PduS from Citrobacter freundii.